Here is a 225-residue protein sequence, read N- to C-terminus: Rho GDP-dissociation inhibitor 3 (225 aa).

It belongs to the Rho GDI family.

It localises to the cytoplasm. Functionally, inhibits GDP/GTP exchange reaction of RhoB. Interacts specifically with the GDP- and GTP-bound forms of post-translationally processed Rhob and Rhog proteins, both of which show a growth-regulated expression in mammalian cells. Stimulates the release of the GDP-bound but not the GTP-bound RhoB protein. Also inhibits the GDP/GTP exchange of RhoB but shows less ability to inhibit the dissociation of prebound GTP. The chain is Rho GDP-dissociation inhibitor 3 (ARHGDIG) from Bos taurus (Bovine).